An 812-amino-acid chain; its full sequence is DNA translocase FtsK 1 (812 aa).

Residues 1–11 (MTEKSHKKTAK) are compositionally biased toward basic residues. The tract at residues 1 to 36 (MTEKSHKKTAKGRAGSPSPTSARNKKADNGARGNKV) is disordered. Residues 25–36 (KKADNGARGNKV) show a composition bias toward basic and acidic residues. The next 5 membrane-spanning stretches (helical) occupy residues 63-83 (IGDA…ISLI), 116-136 (VGYY…CVML), 156-176 (IAAA…YFVL), 184-204 (LPVG…AWLL), and 210-230 (LLII…ISWL). Topologically, residues 231 to 812 (EFLNGAGRAV…RKILAHKDHL (582 aa)) are cytoplasmic. Positions 461-670 (GTPVVGDLAK…FTVQSKIDSR (210 aa)) constitute a FtsK domain. Position 481-486 (481-486 (GSGKSV)) interacts with ATP.

The protein belongs to the FtsK/SpoIIIE/SftA family. As to quaternary structure, homohexamer. Forms a ring that surrounds DNA.

Its subcellular location is the cell inner membrane. Functionally, essential cell division protein that coordinates cell division and chromosome segregation. The N-terminus is involved in assembly of the cell-division machinery. The C-terminus functions as a DNA motor that moves dsDNA in an ATP-dependent manner towards the dif recombination site, which is located within the replication terminus region. Translocation stops specifically at Xer-dif sites, where FtsK interacts with the Xer recombinase, allowing activation of chromosome unlinking by recombination. FtsK orienting polar sequences (KOPS) guide the direction of DNA translocation. FtsK can remove proteins from DNA as it translocates, but translocation stops specifically at XerCD-dif site, thereby preventing removal of XerC and XerD from dif. This Neisseria meningitidis serogroup A / serotype 4A (strain DSM 15465 / Z2491) protein is DNA translocase FtsK 1 (ftsK1).